The sequence spans 31 residues: Cytochrome b6-f complex subunit 6 (31 aa).

Residues 4–26 (ITSYFGFLLAASTITPALLIGLN) form a helical membrane-spanning segment.

The protein belongs to the PetL family. As to quaternary structure, the 4 large subunits of the cytochrome b6-f complex are cytochrome b6, subunit IV (17 kDa polypeptide, PetD), cytochrome f and the Rieske protein, while the 4 small subunits are PetG, PetL, PetM and PetN. The complex functions as a dimer.

The protein resides in the plastid. It is found in the chloroplast thylakoid membrane. Component of the cytochrome b6-f complex, which mediates electron transfer between photosystem II (PSII) and photosystem I (PSI), cyclic electron flow around PSI, and state transitions. PetL is important for photoautotrophic growth as well as for electron transfer efficiency and stability of the cytochrome b6-f complex. In Calycanthus floridus var. glaucus (Eastern sweetshrub), this protein is Cytochrome b6-f complex subunit 6.